Reading from the N-terminus, the 352-residue chain is NAD-dependent protein deacetylase sirtuin-2 (352 aa).

S16 is subject to Phosphoserine. The Deacetylase sirtuin-type domain maps to 20 to 301 (RLLDELTLEG…LALAELLGWK (282 aa)). Residues 48 to 52 (AGIST) and 58 to 60 (DFR) contribute to the NAD(+) site. S63 is subject to Phosphoserine. 130-133 (QNID) contacts NAD(+). H150 (proton acceptor) is an active-site residue. Zn(2+) contacts are provided by C158 and C163. S170 bears the Phosphoserine mark. Zn(2+) contacts are provided by C184 and C187. Residues 225–226 (TS), 249–251 (NKE), and C287 each bind NAD(+). A disordered region spans residues 314-352 (SIDAQSGAGVPNPSTSASPKKSPPPAKDEARTTEREKPQ). The span at 324-333 (PNPSTSASPK) shows a compositional bias: low complexity. Phosphoserine is present on residues S331 and S335. A compositionally biased stretch (basic and acidic residues) spans 339–352 (AKDEARTTEREKPQ).

Belongs to the sirtuin family. Class I subfamily. As to quaternary structure, interacts with CDC20, FOXO3 and FZR1. Associates with microtubules in primary cortical mature neurons. Homotrimer. Interacts (via both phosphorylated, unphosphorylated, active or inactive forms) with HDAC6; the interaction is necessary for the complex to interact with alpha-tubulin, suggesting that these proteins belong to a large complex that deacetylates the cytoskeleton. Interacts with FOXO1; the interaction is disrupted upon serum-starvation or oxidative stress, leading to increased level of acetylated FOXO1 and induction of autophagy. Interacts with RELA; the interaction occurs in the cytoplasm and is increased in a TNF-alpha-dependent manner. Interacts with HOXA10; the interaction is direct. Interacts with YWHAB and YWHAG; the interactions occur in a AKT-dependent manner and increase SIRT2-dependent TP53 deacetylation. Interacts with MAPK1/ERK2 and MAPK3/ERK1; the interactions increase SIRT2 stability and deacetylation activity. Interacts (phosphorylated form) with KMT5A isoform 2; the interaction is direct, stimulates KMT5A-mediated methyltransferase activity on histone at 'Lys-20' (H4K20me1) and is increased in a H(2)O(2)-induced oxidative stress-dependent manner. Interacts with G6PD; the interaction is enhanced by H(2)O(2) treatment. Interacts with a G1/S-specific cyclin E-CDK2 complex. Interacts with AURKA, CDK5R1 (p35 form) and CDK5 and HIF1A. Interacts with the tRNA ligase SARS1; recruited to the VEGFA promoter via interaction with SARS1. Interacts with BEX4; negatively regulates alpha-tubulin deacetylation by SIRT2. Interacts with MORN3; the interaction enhances the ubiquitination of p53/TP53. Zn(2+) serves as cofactor. In terms of processing, phosphorylated at phosphoserine and phosphothreonine. Phosphorylated at Ser-331 by a mitotic kinase CDK1/cyclin B at the G2/M transition; phosphorylation regulates the delay in cell-cycle progression. Phosphorylated at Ser-331 by a mitotic kinase G1/S-specific cyclin E/Cdk2 complex; phosphorylation inactivates SIRT2-mediated alpha-tubulin deacetylation and thereby negatively regulates cell adhesion, cell migration and neurite outgrowth during neuronal differentiation. Phosphorylated by cyclin A/Cdk2 and p35-Cdk5 complexes and to a lesser extent by the cyclin D3/Cdk4 and cyclin B/Cdk1, in vitro. Dephosphorylated at Ser-331 by CDC14A and CDC14B around early anaphase. Acetylated by EP300; acetylation leads both to the decreased of SIRT2-mediated alpha-tubulin deacetylase activity and SIRT2-mediated down-regulation of TP53 transcriptional activity. Post-translationally, ubiquitinated.

The protein resides in the nucleus. It localises to the cytoplasm. The protein localises to the perinuclear region. It is found in the cytoskeleton. Its subcellular location is the microtubule organizing center. The protein resides in the centrosome. It localises to the centriole. The protein localises to the spindle. It is found in the midbody. Its subcellular location is the chromosome. The protein resides in the perikaryon. It localises to the cell projection. The protein localises to the growth cone. It is found in the myelin membrane. The catalysed reaction is N(6)-acetyl-L-lysyl-[protein] + NAD(+) + H2O = 2''-O-acetyl-ADP-D-ribose + nicotinamide + L-lysyl-[protein]. It catalyses the reaction N(6)-tetradecanoyl-L-lysyl-[protein] + NAD(+) + H2O = 2''-O-tetradecanoyl-ADP-D-ribose + nicotinamide + L-lysyl-[protein]. It carries out the reaction N(6)-hexadecanoyl-L-lysyl-[protein] + NAD(+) + H2O = 2''-O-hexadecanoyl-ADP-D-ribose + nicotinamide + L-lysyl-[protein]. Its activity is regulated as follows. Inhibited by Sirtinol, A3 and M15 small molecules. Inhibited by nicotinamide. Inhibited by a macrocyclic peptide inhibitor S2iL5. Inhibited by EP300-induced acetylation. In terms of biological role, NAD-dependent protein deacetylase, which deacetylates internal lysines on histone and alpha-tubulin as well as many other proteins such as key transcription factors. Participates in the modulation of multiple and diverse biological processes such as cell cycle control, genomic integrity, microtubule dynamics, cell differentiation, metabolic networks, and autophagy. Plays a major role in the control of cell cycle progression and genomic stability. Functions in the antephase checkpoint preventing precocious mitotic entry in response to microtubule stress agents, and hence allowing proper inheritance of chromosomes. Positively regulates the anaphase promoting complex/cyclosome (APC/C) ubiquitin ligase complex activity by deacetylating CDC20 and FZR1, then allowing progression through mitosis. Associates both with chromatin at transcriptional start sites (TSSs) and enhancers of active genes. Plays a role in cell cycle and chromatin compaction through epigenetic modulation of the regulation of histone H4 'Lys-20' methylation (H4K20me1) during early mitosis. Specifically deacetylates histone H4 at 'Lys-16' (H4K16ac) between the G2/M transition and metaphase enabling H4K20me1 deposition by KMT5A leading to ulterior levels of H4K20me2 and H4K20me3 deposition throughout cell cycle, and mitotic S-phase progression. Deacetylates KMT5A modulating KMT5A chromatin localization during the mitotic stress response. Also deacetylates histone H3 at 'Lys-57' (H3K56ac) during the mitotic G2/M transition. During oocyte meiosis progression, may deacetylate histone H4 at 'Lys-16' (H4K16ac) and alpha-tubulin, regulating spindle assembly and chromosome alignment by influencing microtubule dynamics and kinetochore function. Deacetylates histone H4 at 'Lys-16' (H4K16ac) at the VEGFA promoter and thereby contributes to regulate expression of VEGFA, a key regulator of angiogenesis. Deacetylates alpha-tubulin at 'Lys-40' and hence controls neuronal motility, oligodendroglial cell arbor projection processes and proliferation of non-neuronal cells. Phosphorylation at Ser-368 by a G1/S-specific cyclin E-CDK2 complex inactivates SIRT2-mediated alpha-tubulin deacetylation, negatively regulating cell adhesion, cell migration and neurite outgrowth during neuronal differentiation. Deacetylates PARD3 and participates in the regulation of Schwann cell peripheral myelination formation during early postnatal development and during postinjury remyelination. Involved in several cellular metabolic pathways. Plays a role in the regulation of blood glucose homeostasis by deacetylating and stabilizing phosphoenolpyruvate carboxykinase PCK1 activity in response to low nutrient availability. Acts as a key regulator in the pentose phosphate pathway (PPP) by deacetylating and activating the glucose-6-phosphate G6PD enzyme, and therefore, stimulates the production of cytosolic NADPH to counteract oxidative damage. Maintains energy homeostasis in response to nutrient deprivation as well as energy expenditure by inhibiting adipogenesis and promoting lipolysis. Attenuates adipocyte differentiation by deacetylating and promoting FOXO1 interaction to PPARG and subsequent repression of PPARG-dependent transcriptional activity. Plays a role in the regulation of lysosome-mediated degradation of protein aggregates by autophagy in neuronal cells. Deacetylates FOXO1 in response to oxidative stress or serum deprivation, thereby negatively regulating FOXO1-mediated autophagy. Deacetylates a broad range of transcription factors and co-regulators regulating target gene expression. Deacetylates transcriptional factor FOXO3 stimulating the ubiquitin ligase SCF(SKP2)-mediated FOXO3 ubiquitination and degradation. Deacetylates HIF1A and therefore promotes HIF1A degradation and inhibition of HIF1A transcriptional activity in tumor cells in response to hypoxia. Deacetylates RELA in the cytoplasm inhibiting NF-kappaB-dependent transcription activation upon TNF-alpha stimulation. Inhibits transcriptional activation by deacetylating p53/TP53 and EP300. Also deacetylates EIF5A. Functions as a negative regulator on oxidative stress-tolerance in response to anoxia-reoxygenation conditions. Plays a role as tumor suppressor. In addition to protein deacetylase activity, also has activity toward long-chain fatty acyl groups and mediates protein-lysine demyristoylation and depalmitoylation of target proteins, such as ARF6 and KRAS, thereby regulating their association with membranes. The protein is NAD-dependent protein deacetylase sirtuin-2 (SIRT2) of Pongo abelii (Sumatran orangutan).